The primary structure comprises 361 residues: Chorismate synthase (361 aa).

2 residues coordinate NADP(+): Arg48 and Arg54. FMN contacts are provided by residues 125–127 (RSS), 238–239 (NA), Gly278, 293–297 (KPTSS), and Arg319.

Belongs to the chorismate synthase family. As to quaternary structure, homotetramer. FMNH2 is required as a cofactor.

The catalysed reaction is 5-O-(1-carboxyvinyl)-3-phosphoshikimate = chorismate + phosphate. Its pathway is metabolic intermediate biosynthesis; chorismate biosynthesis; chorismate from D-erythrose 4-phosphate and phosphoenolpyruvate: step 7/7. Its function is as follows. Catalyzes the anti-1,4-elimination of the C-3 phosphate and the C-6 proR hydrogen from 5-enolpyruvylshikimate-3-phosphate (EPSP) to yield chorismate, which is the branch point compound that serves as the starting substrate for the three terminal pathways of aromatic amino acid biosynthesis. This reaction introduces a second double bond into the aromatic ring system. The sequence is that of Chorismate synthase from Shigella boydii serotype 18 (strain CDC 3083-94 / BS512).